Consider the following 259-residue polypeptide: MSKYKLIMLRHGEGAWNKENRFCSWVDQKLNSEGMEEARNCGKQLKALNFEFDLVFTSVLNRSIHTAWLILEELGQEWVPVESSWRLNERHYGALIGLNREQMALNHGEEQVRLWRRSYNVTPPPIEESHPYYQEIYNDRRYKVCDVPLDQLPRSESLKDVLERLLPYWNERIAPEVLRGKTILISAHGNSSRALLKHLEGISDEDIINITLPTGVPILLELDENLRAVGPHQFLGDQEAIQAAIKKVEDQGKVKQAKK.

Ser2 bears the N-acetylserine mark. Residues Lys3 and Lys5 are each glycosylated (N-linked (Glc) (glycation) lysine; in vitro). 10–17 provides a ligand contact to substrate; it reads RHGEGAWN. His11 (tele-phosphohistidine intermediate) is an active-site residue. Lys18 carries an N-linked (Glc) (glycation) lysine; in vitro glycan. 23–24 serves as a coordination point for substrate; it reads CS. Lys43 carries an N-linked (Glc) (glycation) lysine; in vitro glycan. Substrate is bound by residues Arg62, 89–92, Arg100, and 116–117; these read ERHY and RR. Glu89 acts as the Proton donor/acceptor in catalysis. Thr122 is modified (phosphothreonine). A glycan (N-linked (Glc) (glycation) lysine) is linked at Lys159. 189–190 contributes to the substrate binding site; it reads GN. N-linked (Glc) (glycation) lysine; in vitro glycosylation occurs at Lys197.

This sequence belongs to the phosphoglycerate mutase family. BPG-dependent PGAM subfamily. As to quaternary structure, homodimer. Post-translationally, glycation of Lys-159 in diabetic patients inactivates the enzyme. Expressed in red blood cells. Expressed in non-erythroid cells of the placenta; present in the syncytiotrophoblast layer of the placental villi at the feto-maternal interface (at protein level).

The enzyme catalyses (2R)-3-phospho-glyceroyl phosphate = (2R)-2,3-bisphosphoglycerate + H(+). It catalyses the reaction (2R)-2-phosphoglycerate = (2R)-3-phosphoglycerate. Its activity is regulated as follows. At alkaline pH BPGM favors the synthase reaction; however, at lower pH the phosphatase reaction is dominant. Inhibited by citrate. Functionally, plays a major role in regulating hemoglobin oxygen affinity by controlling the levels of its allosteric effector 2,3-bisphosphoglycerate (2,3-BPG). Also exhibits mutase (EC 5.4.2.11) activity. In Homo sapiens (Human), this protein is Bisphosphoglycerate mutase (BPGM).